A 353-amino-acid polypeptide reads, in one-letter code: MPWPLLLLLAVSGAQTTRPCFPGCQCEVETFGLFDSFSLTRVDCSGLGPHIMPVPIPLDTAHLDLSSNRLEMVNESVLAGPGYTTLAGLDLSHNLLTSISPTAFSRLRYLESLDLSHNGLTALPAESFTSSPLSDVNLSHNQLREVSVSAFTTHSQGRALHVDLSHNLIHRLVPHPTRAGLPAPTIQSLNLAWNRLHAVPNLRDLPLRYLSLDGNPLAVIGPGAFAGLGGLTHLSLASLQRLPELAPSGFRELPGLQVLDLSGNPKLNWAGAEVFSGLSSLQELDLSGTNLVPLPEALLLHLPALQSVSVGQDVRCRRLVREGTYPRRPGSSPKVALHCVDTRDSAARGPTIL.

The signal sequence occupies residues 1-16 (MPWPLLLLLAVSGAQT). Residues 17–58 (TRPCFPGCQCEVETFGLFDSFSLTRVDCSGLGPHIMPVPIPL) form the LRRNT domain. 10 LRR repeats span residues 59–80 (DTAH…VLAG), 85–106 (TLAG…AFSR), 109–130 (YLES…SFTS), 132–153 (PLSD…AFTT), 159–179 (ALHV…PTRA), 185–206 (TIQS…RDLP), 207–227 (LRYL…AFAG), 230–249 (GLTH…APSG), 255–276 (GLQV…EVFS), and 280–301 (SLQE…LLLH). Residue Asn-74 is glycosylated (N-linked (GlcNAc...) asparagine). Asn-137 is a glycosylation site (N-linked (GlcNAc...) asparagine).

In terms of assembly, interacts with FZD4 (via FZ domain); competes with WNT2B for binding to FZD4, inhibiting Wnt signaling and repressing peripheral eye development. Interacts with TGFB1; the interaction contributes to regulation of the hair cycle. Interacts with netrin. Interacts with CCN2.

The protein localises to the secreted. Contributes to various developmental events and other processes such as wound healing and cholesterol homeostasis through its interactions with multiple signaling pathways. Wnt signaling inhibitor which competes with WNT2B for binding to Wnt receptor FZD4 and represses WNT2B-dependent development of the peripheral eye. Plays a role in regulating the hair cycle by controlling TGFB1 signaling. Required for the development of the anterior commissure in the brain by inhibiting neurite outgrowth. Essential for terminal differentiation of hippocampal neural stem cells. Plays a role in regulating bone elongation and bone mass by modulating growth plate chondrocyte function and overall body size. Required for development of the inner ear through its involvement in stereocilia formation in inner hair cells. Facilitates wound healing by inhibiting secretion of TGFB1 from macrophages which prevents myofibroblast differentiation, maintaining inflammatory cell quiescence. Plays a role in cholesterol homeostasis by reducing circulating high-density lipoprotein cholesterol, lowering cholesterol efflux capacity and decreasing cholesterol-to-bile acid conversion in the liver. In one study, shown to negatively regulate sympathetic innervation in brown fat, leading to reduced energy expenditure. In another study, shown not to affect brown fat thermogenic capacity, body weight gain or glucose homeostasis. This Homo sapiens (Human) protein is Tsukushi (TSKU).